Reading from the N-terminus, the 123-residue chain is Angiogenin-2 (123 aa).

Pyrrolidone carboxylic acid is present on glutamine 1. Histidine 12 (proton acceptor) is an active-site residue. Intrachain disulfides connect cysteine 25–cysteine 80, cysteine 38–cysteine 91, and cysteine 56–cysteine 106. The Nucleolar localization signal signature appears at glutamate 30–methionine 34. Asparagine 33 carries an N-linked (GlcNAc...) asparagine glycan. Zn(2+) is bound by residues aspartate 40, histidine 82, and histidine 113. The active-site Proton donor is histidine 113.

The protein belongs to the pancreatic ribonuclease family. As to expression, serum and milk.

Its subcellular location is the cytoplasmic vesicle. It localises to the secretory vesicle lumen. The protein localises to the secreted. It is found in the nucleus. The protein resides in the nucleolus. Divalent metal ions, such as Cu2+ and Zn2+, may inhibit the ribonucleolytic activity. Its function is as follows. Binds tightly to placental ribonuclease inhibitor and has very low ribonuclease activity. Has potent angiogenic activity. Angiogenin induces vascularization of normal and malignant tissues. Abolishes protein synthesis by specifically hydrolyzing cellular tRNAs. In Bos taurus (Bovine), this protein is Angiogenin-2.